The following is a 197-amino-acid chain: Imidazoleglycerol-phosphate dehydratase (197 aa).

This sequence belongs to the imidazoleglycerol-phosphate dehydratase family.

The protein resides in the cytoplasm. It catalyses the reaction D-erythro-1-(imidazol-4-yl)glycerol 3-phosphate = 3-(imidazol-4-yl)-2-oxopropyl phosphate + H2O. Its pathway is amino-acid biosynthesis; L-histidine biosynthesis; L-histidine from 5-phospho-alpha-D-ribose 1-diphosphate: step 6/9. The chain is Imidazoleglycerol-phosphate dehydratase from Thermobifida fusca (strain YX).